The chain runs to 381 residues: Sulfate adenylyltransferase (381 aa).

It belongs to the sulfate adenylyltransferase family.

It carries out the reaction sulfate + ATP + H(+) = adenosine 5'-phosphosulfate + diphosphate. Its pathway is sulfur metabolism; hydrogen sulfide biosynthesis; sulfite from sulfate: step 1/3. The protein is Sulfate adenylyltransferase of Carboxydothermus hydrogenoformans (strain ATCC BAA-161 / DSM 6008 / Z-2901).